The sequence spans 131 residues: uncharacterized protein (131 aa).

Residues 31–40 (AAATSRAAPL) are compositionally biased toward low complexity. The disordered stretch occupies residues 31-131 (AAATSRAAPL…EAKTEQTKTP (101 aa)).

This is an uncharacterized protein from Homo sapiens (Human).